The chain runs to 181 residues: Peptide deformylase (181 aa).

Residues C104 and H146 each coordinate Fe cation. Residue E147 is part of the active site. Residue H150 participates in Fe cation binding.

The protein belongs to the polypeptide deformylase family. Requires Fe(2+) as cofactor.

It catalyses the reaction N-terminal N-formyl-L-methionyl-[peptide] + H2O = N-terminal L-methionyl-[peptide] + formate. Removes the formyl group from the N-terminal Met of newly synthesized proteins. Requires at least a dipeptide for an efficient rate of reaction. N-terminal L-methionine is a prerequisite for activity but the enzyme has broad specificity at other positions. This Helicobacter hepaticus (strain ATCC 51449 / 3B1) protein is Peptide deformylase.